The chain runs to 254 residues: 4-hydroxy-tetrahydrodipicolinate reductase (254 aa).

Residues Gly-8 to Met-13, Gly-87 to Thr-89, and Ala-111 to Met-114 contribute to the NAD(+) site. The active-site Proton donor/acceptor is the His-143. His-144 is a binding site for (S)-2,3,4,5-tetrahydrodipicolinate. The active-site Proton donor is Lys-147. Gly-153 to Thr-154 serves as a coordination point for (S)-2,3,4,5-tetrahydrodipicolinate.

It belongs to the DapB family.

Its subcellular location is the cytoplasm. It carries out the reaction (S)-2,3,4,5-tetrahydrodipicolinate + NAD(+) + H2O = (2S,4S)-4-hydroxy-2,3,4,5-tetrahydrodipicolinate + NADH + H(+). It catalyses the reaction (S)-2,3,4,5-tetrahydrodipicolinate + NADP(+) + H2O = (2S,4S)-4-hydroxy-2,3,4,5-tetrahydrodipicolinate + NADPH + H(+). The protein operates within amino-acid biosynthesis; L-lysine biosynthesis via DAP pathway; (S)-tetrahydrodipicolinate from L-aspartate: step 4/4. Functionally, catalyzes the conversion of 4-hydroxy-tetrahydrodipicolinate (HTPA) to tetrahydrodipicolinate. In Campylobacter fetus subsp. fetus (strain 82-40), this protein is 4-hydroxy-tetrahydrodipicolinate reductase.